A 565-amino-acid polypeptide reads, in one-letter code: FAD-linked oxidoreductase ZEB1 (565 aa).

The first 27 residues, 1 to 27 (MKLSPSKYLPVLLGTLSLTIANPSADC), serve as a signal peptide directing secretion. Asparagine 46, asparagine 82, and asparagine 100 each carry an N-linked (GlcNAc...) asparagine glycan. Residues 115-293 (LGNYVSYAIA…ISMTVKAHPG (179 aa)) enclose the FAD-binding PCMH-type domain. Residues asparagine 340, asparagine 352, and asparagine 421 are each glycosylated (N-linked (GlcNAc...) asparagine).

It belongs to the oxygen-dependent FAD-linked oxidoreductase family.

Its pathway is mycotoxin biosynthesis. FAD-linked oxidoreductase; part of the gene cluster that mediates the biosynthesis of zearalenone (ZEA), a nonsteroid estrogen that is a contaminant of cereal grains and causes estrogenic disorders in humans and animals. The ZEA backbone is synthesized from a single acetyl-CoA molecule and eight malonyl-CoA molecules. The reducing polyketide synthase ZEA2 is proposed to synthesize a reduced hexaketide intermediate by using different combinations of its reductive domains during each round of condensation. The hexaketide thioester is then transacylated to the non-reducing polyketide synthase ZEA1 and is further condensed with three malonyl-CoAs without reductive tailoring to yield a mixed reduced/unreduced nonaketide. ZEA1 must be able to interact with ZEA2 to facilitate starter-unit acyltransfer and initiate polyketide biosynthesis. ZEA1 also mediates the required C2-C7 cyclization to form the resorcylate core and catalyzes the formation of the macrolactone. ZEB1 is then responsible for the chemical conversion of beta-zearalenonol (beta-ZOL) to ZEA in the biosynthetic pathway. The chain is FAD-linked oxidoreductase ZEB1 from Gibberella zeae (strain ATCC MYA-4620 / CBS 123657 / FGSC 9075 / NRRL 31084 / PH-1) (Wheat head blight fungus).